A 212-amino-acid polypeptide reads, in one-letter code: Adenylate kinase (212 aa).

10–15 (GAGKGT) is a binding site for ATP. The segment at 30 to 59 (STGDMFRAAMANQTEMGRLAKSYIDKGELV) is NMP. Residues T31, R36, 57-59 (ELV), 86-89 (GYPR), and Q93 contribute to the AMP site. An LID region spans residues 127-159 (GRIINRKTGETFHKVFNPPVDYKEEDYYQREDD). Residues R128 and 137–138 (TF) each bind ATP. Positions 156 and 167 each coordinate AMP. Q195 contributes to the ATP binding site.

It belongs to the adenylate kinase family. In terms of assembly, monomer.

Its subcellular location is the cytoplasm. The enzyme catalyses AMP + ATP = 2 ADP. Its pathway is purine metabolism; AMP biosynthesis via salvage pathway; AMP from ADP: step 1/1. Catalyzes the reversible transfer of the terminal phosphate group between ATP and AMP. Plays an important role in cellular energy homeostasis and in adenine nucleotide metabolism. The chain is Adenylate kinase from Streptococcus pyogenes serotype M12 (strain MGAS2096).